We begin with the raw amino-acid sequence, 90 residues long: Evasin P458 (90 aa).

A signal peptide spans Met-1–Ala-24. 3 disulfides stabilise this stretch: Cys-44/Cys-63, Cys-48/Cys-65, and Cys-59/Cys-76. Residue Asn-47 is glycosylated (N-linked (GlcNAc...) asparagine).

It localises to the secreted. Salivary chemokine-binding protein which binds to host chemokines CXCL1, CXCL2, CXCL3, CXCL5, CXCL6 and CXCL13. In Ixodes ricinus (Common tick), this protein is Evasin P458.